The following is a 252-amino-acid chain: Hydroxyacylglutathione hydrolase (252 aa).

Residues H54, H56, D58, H59, H111, D128, and H166 each contribute to the Zn(2+) site.

This sequence belongs to the metallo-beta-lactamase superfamily. Glyoxalase II family. Monomer. Zn(2+) serves as cofactor.

The catalysed reaction is an S-(2-hydroxyacyl)glutathione + H2O = a 2-hydroxy carboxylate + glutathione + H(+). It participates in secondary metabolite metabolism; methylglyoxal degradation; (R)-lactate from methylglyoxal: step 2/2. Thiolesterase that catalyzes the hydrolysis of S-D-lactoyl-glutathione to form glutathione and D-lactic acid. This Aliivibrio fischeri (strain ATCC 700601 / ES114) (Vibrio fischeri) protein is Hydroxyacylglutathione hydrolase.